We begin with the raw amino-acid sequence, 310 residues long: Homoserine kinase (310 aa).

91 to 101 (PIGSGLGSSAC) is an ATP binding site.

The protein belongs to the GHMP kinase family. Homoserine kinase subfamily.

It localises to the cytoplasm. The enzyme catalyses L-homoserine + ATP = O-phospho-L-homoserine + ADP + H(+). Its pathway is amino-acid biosynthesis; L-threonine biosynthesis; L-threonine from L-aspartate: step 4/5. Catalyzes the ATP-dependent phosphorylation of L-homoserine to L-homoserine phosphate. The polypeptide is Homoserine kinase (Shigella sonnei (strain Ss046)).